Here is a 259-residue protein sequence, read N- to C-terminus: Ditrans,polycis-undecaprenyl-diphosphate synthase ((2E,6E)-farnesyl-diphosphate specific) (259 aa).

Aspartate 32 is a catalytic residue. A Mg(2+)-binding site is contributed by aspartate 32. Residues 33–36, tryptophan 37, arginine 45, histidine 49, and 77–79 each bind substrate; these read GNGR and STE. Asparagine 80 serves as the catalytic Proton acceptor. Residues tryptophan 81, arginine 83, arginine 203, and 209 to 211 each bind substrate; that span reads RIS. Glutamate 222 lines the Mg(2+) pocket.

This sequence belongs to the UPP synthase family. As to quaternary structure, homodimer. Mg(2+) serves as cofactor.

The catalysed reaction is 8 isopentenyl diphosphate + (2E,6E)-farnesyl diphosphate = di-trans,octa-cis-undecaprenyl diphosphate + 8 diphosphate. In terms of biological role, catalyzes the sequential condensation of isopentenyl diphosphate (IPP) with (2E,6E)-farnesyl diphosphate (E,E-FPP) to yield (2Z,6Z,10Z,14Z,18Z,22Z,26Z,30Z,34E,38E)-undecaprenyl diphosphate (di-trans,octa-cis-UPP). UPP is the precursor of glycosyl carrier lipid in the biosynthesis of bacterial cell wall polysaccharide components such as peptidoglycan and lipopolysaccharide. This chain is Ditrans,polycis-undecaprenyl-diphosphate synthase ((2E,6E)-farnesyl-diphosphate specific) (uppS), found in Lactiplantibacillus plantarum (strain ATCC BAA-793 / NCIMB 8826 / WCFS1) (Lactobacillus plantarum).